Reading from the N-terminus, the 691-residue chain is DNA ligase (691 aa).

NAD(+) contacts are provided by residues 41–45 (DAEYD), 90–91 (SL), and Glu-130. Lys-132 functions as the N6-AMP-lysine intermediate in the catalytic mechanism. NAD(+)-binding residues include Arg-153, Glu-190, Lys-307, and Lys-331. Residues Cys-425, Cys-428, Cys-443, and Cys-449 each contribute to the Zn(2+) site. The 82-residue stretch at 610–691 (APQGVLAGKT…MHTLLEGHAR (82 aa)) folds into the BRCT domain.

This sequence belongs to the NAD-dependent DNA ligase family. LigA subfamily. Requires Mg(2+) as cofactor. The cofactor is Mn(2+).

It catalyses the reaction NAD(+) + (deoxyribonucleotide)n-3'-hydroxyl + 5'-phospho-(deoxyribonucleotide)m = (deoxyribonucleotide)n+m + AMP + beta-nicotinamide D-nucleotide.. Functionally, DNA ligase that catalyzes the formation of phosphodiester linkages between 5'-phosphoryl and 3'-hydroxyl groups in double-stranded DNA using NAD as a coenzyme and as the energy source for the reaction. It is essential for DNA replication and repair of damaged DNA. The sequence is that of DNA ligase from Burkholderia pseudomallei (strain K96243).